We begin with the raw amino-acid sequence, 950 residues long: Nonsense-mediated mRNA decay factor SMG8 (950 aa).

2 disordered regions span residues 560-607 (HTGK…LSPT) and 624-651 (NESQ…ADTE). The span at 568–582 (QDEDGEEDAEDEEGQ) shows a compositional bias: acidic residues. Residues 593–607 (QNTASNGCSQPLSPT) show a composition bias toward polar residues. The segment covering 624-648 (NESQASSEQLSNSEQNSTSSGTSSA) has biased composition (low complexity).

This sequence belongs to the SMG8 family.

Involved in nonsense-mediated decay (NMD) of mRNAs containing premature stop codons. Probable component of kinase complex containing nonC and recruited to stalled ribosomes. This Drosophila yakuba (Fruit fly) protein is Nonsense-mediated mRNA decay factor SMG8.